The sequence spans 228 residues: HTH-type transcriptional regulator TfdT (228 aa).

Residues 1-58 (MEIRQLKYFVAVAEAGGFGTAAQRMHISQPPLTRQIQALERDIGAKLFERTARGVELT) enclose the HTH lysR-type domain. The H-T-H motif DNA-binding region spans 18 to 37 (FGTAAQRMHISQPPLTRQIQ).

It belongs to the LysR transcriptional regulatory family.

Its subcellular location is the cytoplasm. Does not seem to be involved in the regulation of 3-chlorocatechol degradation. Does not activate the expression of its presumed target operon, tfdCDEF. This Cupriavidus pinatubonensis (strain JMP 134 / LMG 1197) (Cupriavidus necator (strain JMP 134)) protein is HTH-type transcriptional regulator TfdT (tfdT).